A 555-amino-acid chain; its full sequence is Formate--tetrahydrofolate ligase (555 aa).

T65–S72 serves as a coordination point for ATP.

Belongs to the formate--tetrahydrofolate ligase family.

The enzyme catalyses (6S)-5,6,7,8-tetrahydrofolate + formate + ATP = (6R)-10-formyltetrahydrofolate + ADP + phosphate. Its pathway is one-carbon metabolism; tetrahydrofolate interconversion. The chain is Formate--tetrahydrofolate ligase from Staphylococcus epidermidis (strain ATCC 35984 / DSM 28319 / BCRC 17069 / CCUG 31568 / BM 3577 / RP62A).